The sequence spans 883 residues: Phosphoenolpyruvate carboxylase (883 aa).

Active-site residues include His-138 and Lys-546.

The protein belongs to the PEPCase type 1 family. Mg(2+) serves as cofactor.

It catalyses the reaction oxaloacetate + phosphate = phosphoenolpyruvate + hydrogencarbonate. Functionally, forms oxaloacetate, a four-carbon dicarboxylic acid source for the tricarboxylic acid cycle. The chain is Phosphoenolpyruvate carboxylase from Shigella dysenteriae serotype 1 (strain Sd197).